The sequence spans 601 residues: Elongation factor 4 (601 aa).

One can recognise a tr-type G domain in the interval 6–188; that stretch reads NYIRNFSIVA…AIVRQLPPPH (183 aa). Residues 18–23 and 135–138 each bind GTP; these read DHGKST and NKVD.

It belongs to the TRAFAC class translation factor GTPase superfamily. Classic translation factor GTPase family. LepA subfamily.

The protein localises to the cell inner membrane. It carries out the reaction GTP + H2O = GDP + phosphate + H(+). Required for accurate and efficient protein synthesis under certain stress conditions. May act as a fidelity factor of the translation reaction, by catalyzing a one-codon backward translocation of tRNAs on improperly translocated ribosomes. Back-translocation proceeds from a post-translocation (POST) complex to a pre-translocation (PRE) complex, thus giving elongation factor G a second chance to translocate the tRNAs correctly. Binds to ribosomes in a GTP-dependent manner. This chain is Elongation factor 4, found in Bartonella quintana (strain Toulouse) (Rochalimaea quintana).